Reading from the N-terminus, the 65-residue chain is Large ribosomal subunit protein bL35 (65 aa).

It belongs to the bacterial ribosomal protein bL35 family.

This is Large ribosomal subunit protein bL35 from Rubrobacter xylanophilus (strain DSM 9941 / JCM 11954 / NBRC 16129 / PRD-1).